A 144-amino-acid chain; its full sequence is Large ribosomal subunit protein uL15 (144 aa).

The segment at 1–58 (MNLSNLRAPRKANEKKKRVGRGMGSGMGKTSARGHKGQRSRSGSRMMRGFEGGQMPLH) is disordered. Positions 8–20 (APRKANEKKKRVG) are enriched in basic residues. Positions 40 to 49 (SRSGSRMMRG) are enriched in low complexity.

The protein belongs to the universal ribosomal protein uL15 family. In terms of assembly, part of the 50S ribosomal subunit.

In terms of biological role, binds to the 23S rRNA. The chain is Large ribosomal subunit protein uL15 from Koribacter versatilis (strain Ellin345).